A 304-amino-acid polypeptide reads, in one-letter code: Ribonuclease Z (304 aa).

Zn(2+)-binding residues include His-63, His-65, Asp-67, His-68, His-143, Asp-213, and His-271. Asp-67 acts as the Proton acceptor in catalysis.

It belongs to the RNase Z family. Homodimer. The cofactor is Zn(2+).

The catalysed reaction is Endonucleolytic cleavage of RNA, removing extra 3' nucleotides from tRNA precursor, generating 3' termini of tRNAs. A 3'-hydroxy group is left at the tRNA terminus and a 5'-phosphoryl group is left at the trailer molecule.. Its function is as follows. Zinc phosphodiesterase, which displays some tRNA 3'-processing endonuclease activity. Probably involved in tRNA maturation, by removing a 3'-trailer from precursor tRNA. The chain is Ribonuclease Z from Porphyromonas gingivalis (strain ATCC 33277 / DSM 20709 / CIP 103683 / JCM 12257 / NCTC 11834 / 2561).